We begin with the raw amino-acid sequence, 182 residues long: Putative manganese efflux pump MntP 2 (182 aa).

6 helical membrane-spanning segments follow: residues 2–22, 37–57, 63–83, 104–123, 127–149, and 162–182; these read IELT…SIAL, AGGF…YLGV, IGGI…LKMI, LLLL…LTLT, LPLW…GGVH, and AEYL…IEHS.

It belongs to the MntP (TC 9.B.29) family.

The protein resides in the cell inner membrane. Probably functions as a manganese efflux pump. In Wolinella succinogenes (strain ATCC 29543 / DSM 1740 / CCUG 13145 / JCM 31913 / LMG 7466 / NCTC 11488 / FDC 602W) (Vibrio succinogenes), this protein is Putative manganese efflux pump MntP 2.